We begin with the raw amino-acid sequence, 206 residues long: Ribosomal RNA small subunit methyltransferase G (206 aa).

S-adenosyl-L-methionine contacts are provided by residues G73, L78, 124-125 (VE), and R139.

This sequence belongs to the methyltransferase superfamily. RNA methyltransferase RsmG family.

It localises to the cytoplasm. It catalyses the reaction guanosine(527) in 16S rRNA + S-adenosyl-L-methionine = N(7)-methylguanosine(527) in 16S rRNA + S-adenosyl-L-homocysteine. Functionally, specifically methylates the N7 position of guanine in position 527 of 16S rRNA. The sequence is that of Ribosomal RNA small subunit methyltransferase G from Yersinia pseudotuberculosis serotype O:1b (strain IP 31758).